The following is a 208-amino-acid chain: Germin-like protein subfamily 3 member 1 (208 aa).

The signal sequence occupies residues 1–18 (MLRTIFLLSLLFALSNAS). The cysteines at positions 23 and 38 are disulfide-linked. The Cupin type-1 domain maps to 52–198 (SGLGTPGNTT…TTFLDATTVK (147 aa)). N-linked (GlcNAc...) asparagine glycosylation occurs at Asn59. His100, His102, Glu107, and His146 together coordinate Mn(2+).

Belongs to the germin family. As to quaternary structure, may not form oligomer. Expressed during germination, and also in green shoots, etiolated seedlings and whole seedlings.

It is found in the secreted. It localises to the extracellular space. The protein resides in the apoplast. May play a role in plant defense. Probably has no oxalate oxidase activity even if the active site is conserved. The sequence is that of Germin-like protein subfamily 3 member 1 (GLP1) from Arabidopsis thaliana (Mouse-ear cress).